Consider the following 557-residue polypeptide: Kelch repeat and BTB domain-containing protein 2 (557 aa).

Positions 26-95 (CDVIITIRDG…LYNRHISSMN (70 aa)) constitute a BTB domain. The 81-residue stretch at 143–223 (IVKYIKRMLM…CIDIQNLDKK (81 aa)) folds into the BACK domain. Kelch repeat units lie at residues 305-352 (EIII…VIDD), 353-399 (TIYA…VLDQ), and 415-464 (SVHA…SHED).

Interacts (via BTB domain) with host CUL3.

The protein resides in the host cytoplasm. In terms of biological role, probable substrate-specific adapter of CUL3-containing E3 ubiquitin-protein ligases which mediate the ubiquitination and subsequent proteasomal degradation of host target proteins. The protein is Kelch repeat and BTB domain-containing protein 2 (KBTB2) of Cowpox virus (strain Brighton Red) (CPV).